The chain runs to 279 residues: Tryptophan synthase alpha chain (279 aa).

Catalysis depends on proton acceptor residues glutamate 50 and aspartate 61.

It belongs to the TrpA family. As to quaternary structure, tetramer of two alpha and two beta chains.

It carries out the reaction (1S,2R)-1-C-(indol-3-yl)glycerol 3-phosphate + L-serine = D-glyceraldehyde 3-phosphate + L-tryptophan + H2O. It participates in amino-acid biosynthesis; L-tryptophan biosynthesis; L-tryptophan from chorismate: step 5/5. In terms of biological role, the alpha subunit is responsible for the aldol cleavage of indoleglycerol phosphate to indole and glyceraldehyde 3-phosphate. This is Tryptophan synthase alpha chain from Azorhizobium caulinodans (strain ATCC 43989 / DSM 5975 / JCM 20966 / LMG 6465 / NBRC 14845 / NCIMB 13405 / ORS 571).